The sequence spans 806 residues: ATP-dependent zinc metalloprotease FTSH 11, chloroplastic/mitochondrial (806 aa).

A chloroplast and mitochondrion-targeting transit peptide spans 1-63 (MSSSTLQASL…RFRPLPCSLR (63 aa)). Basic and acidic residues predominate over residues 106–116 (FVGGEETKSGG). Positions 106–130 (FVGGEETKSGGEEAEVSNGVTEGKE) are disordered. The chain crosses the membrane as a helical span at residues 301–321 (LVSTILFTVAVGLVWIMGAAA). Residue 402–409 (GAPGTGKT) coordinates ATP. His-620 contributes to the Zn(2+) binding site. Glu-621 is an active-site residue. Zn(2+)-binding residues include His-624 and Asp-698.

This sequence in the N-terminal section; belongs to the AAA ATPase family. In the C-terminal section; belongs to the peptidase M41 family. In terms of assembly, homooligomer. Zn(2+) serves as cofactor.

It is found in the mitochondrion inner membrane. The protein resides in the plastid. Its subcellular location is the chloroplast thylakoid membrane. Its function is as follows. Probable ATP-dependent zinc metallopeptidase. Involved in the assembly and/or stability of the complexes I and V. Involved in thermotolerance but not in high light stress resistance or in the assembly/stability of the complexes I and V of the mitochondrial oxidative phosphorylation system. This is ATP-dependent zinc metalloprotease FTSH 11, chloroplastic/mitochondrial (FTSH11) from Arabidopsis thaliana (Mouse-ear cress).